The chain runs to 247 residues: Cobalt transport protein CbiM (247 aa).

Residues Met1–Ala21 form the signal peptide. A run of 7 helical transmembrane segments spans residues Gly27–Leu47, Leu64–Val84, Leu96–Phe116, Leu119–Val139, Gly159–Leu179, Leu181–Ser201, and Ile202–Val222.

Belongs to the CbiM family. Forms an energy-coupling factor (ECF) transporter complex composed of an ATP-binding protein (A component, CbiO), a transmembrane protein (T component, CbiQ) and 2 possible substrate-capture proteins (S components, CbiM and CbiN) of unknown stoichimetry.

The protein localises to the cell membrane. It participates in cofactor biosynthesis; adenosylcobalamin biosynthesis. In terms of biological role, part of the energy-coupling factor (ECF) transporter complex CbiMNOQ involved in cobalt import. This chain is Cobalt transport protein CbiM, found in Kyrpidia tusciae (strain DSM 2912 / NBRC 15312 / T2) (Bacillus tusciae).